A 284-amino-acid polypeptide reads, in one-letter code: Bifunctional protein FolD (284 aa).

NADP(+) is bound by residues 166 to 168 (GSS) and isoleucine 232.

This sequence belongs to the tetrahydrofolate dehydrogenase/cyclohydrolase family. As to quaternary structure, homodimer.

It catalyses the reaction (6R)-5,10-methylene-5,6,7,8-tetrahydrofolate + NADP(+) = (6R)-5,10-methenyltetrahydrofolate + NADPH. The enzyme catalyses (6R)-5,10-methenyltetrahydrofolate + H2O = (6R)-10-formyltetrahydrofolate + H(+). The protein operates within one-carbon metabolism; tetrahydrofolate interconversion. Functionally, catalyzes the oxidation of 5,10-methylenetetrahydrofolate to 5,10-methenyltetrahydrofolate and then the hydrolysis of 5,10-methenyltetrahydrofolate to 10-formyltetrahydrofolate. The sequence is that of Bifunctional protein FolD from Buchnera aphidicola subsp. Cinara cedri (strain Cc).